We begin with the raw amino-acid sequence, 308 residues long: Cytochrome b (308 aa).

The next 4 helical transmembrane spans lie at 1-21 (FGSL…LLAT), 45-66 (WLIR…YIHI), 81-101 (WNVG…GYVL), and 146-166 (FFAL…VHLT). Heme b-binding residues include histidine 51 and histidine 65. Heme b-binding residues include histidine 150 and histidine 164. Histidine 169 is a binding site for a ubiquinone. The next 3 membrane-spanning stretches (helical) occupy residues 194-214 (MKDI…ALFS), 256-276 (LGGV…PLLH), and 288-308 (LSQI…WVGS).

Belongs to the cytochrome b family. The cytochrome bc1 complex contains 11 subunits: 3 respiratory subunits (MT-CYB, CYC1 and UQCRFS1), 2 core proteins (UQCRC1 and UQCRC2) and 6 low-molecular weight proteins (UQCRH/QCR6, UQCRB/QCR7, UQCRQ/QCR8, UQCR10/QCR9, UQCR11/QCR10 and a cleavage product of UQCRFS1). This cytochrome bc1 complex then forms a dimer. It depends on heme b as a cofactor.

It localises to the mitochondrion inner membrane. Functionally, component of the ubiquinol-cytochrome c reductase complex (complex III or cytochrome b-c1 complex) that is part of the mitochondrial respiratory chain. The b-c1 complex mediates electron transfer from ubiquinol to cytochrome c. Contributes to the generation of a proton gradient across the mitochondrial membrane that is then used for ATP synthesis. The protein is Cytochrome b (MT-CYB) of Ptiloprora plumbea (Leaden honeyeater).